A 207-amino-acid chain; its full sequence is Outer-membrane lipoprotein LolB (207 aa).

Positions 1-21 (MPLPDFRFIRLLPLAALVLTA) are cleaved as a signal peptide. C22 is lipidated: N-palmitoyl cysteine. C22 is lipidated: S-diacylglycerol cysteine.

Belongs to the LolB family. In terms of assembly, monomer.

It localises to the cell outer membrane. In terms of biological role, plays a critical role in the incorporation of lipoproteins in the outer membrane after they are released by the LolA protein. The protein is Outer-membrane lipoprotein LolB of Escherichia coli O6:H1 (strain CFT073 / ATCC 700928 / UPEC).